The following is a 290-amino-acid chain: Ribosomal RNA small subunit methyltransferase A (290 aa).

S-adenosyl-L-methionine is bound by residues N27, L29, G54, E75, D100, and N125.

The protein belongs to the class I-like SAM-binding methyltransferase superfamily. rRNA adenine N(6)-methyltransferase family. RsmA subfamily.

Its subcellular location is the cytoplasm. It carries out the reaction adenosine(1518)/adenosine(1519) in 16S rRNA + 4 S-adenosyl-L-methionine = N(6)-dimethyladenosine(1518)/N(6)-dimethyladenosine(1519) in 16S rRNA + 4 S-adenosyl-L-homocysteine + 4 H(+). In terms of biological role, specifically dimethylates two adjacent adenosines (A1518 and A1519) in the loop of a conserved hairpin near the 3'-end of 16S rRNA in the 30S particle. May play a critical role in biogenesis of 30S subunits. The polypeptide is Ribosomal RNA small subunit methyltransferase A (Streptococcus thermophilus (strain CNRZ 1066)).